Here is a 347-residue protein sequence, read N- to C-terminus: Putative phosphoesterase 078R (347 aa).

Positions 52, 87, and 211 each coordinate a divalent metal cation.

This sequence belongs to the metallophosphoesterase superfamily. IIV-6 244L family.

The polypeptide is Putative phosphoesterase 078R (Invertebrate iridescent virus 3 (IIV-3)).